A 368-amino-acid polypeptide reads, in one-letter code: Alanine racemase (368 aa).

Catalysis depends on Lys-40, which acts as the Proton acceptor; specific for D-alanine. Lys-40 is subject to N6-(pyridoxal phosphate)lysine. Substrate is bound at residue Arg-134. Tyr-263 (proton acceptor; specific for L-alanine) is an active-site residue. Met-310 is a substrate binding site.

This sequence belongs to the alanine racemase family. It depends on pyridoxal 5'-phosphate as a cofactor.

The enzyme catalyses L-alanine = D-alanine. It participates in amino-acid biosynthesis; D-alanine biosynthesis; D-alanine from L-alanine: step 1/1. In terms of biological role, catalyzes the interconversion of L-alanine and D-alanine. May also act on other amino acids. This Listeria monocytogenes serotype 4b (strain CLIP80459) protein is Alanine racemase (alr).